A 642-amino-acid chain; its full sequence is Ribosome biogenesis protein BOP1 homolog (642 aa).

The disordered stretch occupies residues 1-28; the sequence is MIHKRMNSTELERTSKKIDDYDSSDEED. A compositionally biased stretch (basic and acidic residues) spans 10–20; the sequence is ELERTSKKIDD. WD repeat units lie at residues 311–351, 353–393, 472–510, 513–552, 556–595, and 612–642; these read GHSG…CLKT, SLDG…DRHR, RLKG…LKKK, TGSQ…KPWK, HHTA…DSLK, and KNGL…ALFT.

It belongs to the WD repeat BOP1/ERB1 family.

Its subcellular location is the nucleus. It is found in the nucleolus. The protein localises to the nucleoplasm. Required for maturation of ribosomal RNAs and formation of the large ribosomal subunit. In Brugia malayi (Filarial nematode worm), this protein is Ribosome biogenesis protein BOP1 homolog.